The following is a 94-amino-acid chain: Co-chaperonin GroES (94 aa).

Belongs to the GroES chaperonin family. In terms of assembly, heptamer of 7 subunits arranged in a ring. Interacts with the chaperonin GroEL.

The protein resides in the cytoplasm. Its function is as follows. Together with the chaperonin GroEL, plays an essential role in assisting protein folding. The GroEL-GroES system forms a nano-cage that allows encapsulation of the non-native substrate proteins and provides a physical environment optimized to promote and accelerate protein folding. GroES binds to the apical surface of the GroEL ring, thereby capping the opening of the GroEL channel. The polypeptide is Co-chaperonin GroES (Finegoldia magna (strain ATCC 29328 / DSM 20472 / WAL 2508) (Peptostreptococcus magnus)).